The primary structure comprises 165 residues: Cytochrome c-type biogenesis protein CcmE (165 aa).

Residues 1 to 29 (MSATAEDNARGAKPAGNFARTVSQRKRKR) lie on the Cytoplasmic side of the membrane. The chain crosses the membrane as a helical; Signal-anchor for type II membrane protein span at residues 30–50 (LFLIGGALAVLAVAVGLMLMA). The Periplasmic segment spans residues 51–165 (FSQDIRFFRT…LKEKGVWEGK (115 aa)). Residues His-143 and Tyr-147 each coordinate heme.

It belongs to the CcmE/CycJ family.

The protein resides in the cell inner membrane. Its function is as follows. Heme chaperone required for the biogenesis of c-type cytochromes. Transiently binds heme delivered by CcmC and transfers the heme to apo-cytochromes in a process facilitated by CcmF and CcmH. In Brucella anthropi (strain ATCC 49188 / DSM 6882 / CCUG 24695 / JCM 21032 / LMG 3331 / NBRC 15819 / NCTC 12168 / Alc 37) (Ochrobactrum anthropi), this protein is Cytochrome c-type biogenesis protein CcmE.